Consider the following 374-residue polypeptide: Putative phosphoserine aminotransferase (374 aa).

Arginine 48 provides a ligand contact to L-glutamate. Pyridoxal 5'-phosphate is bound by residues 82–83, phenylalanine 106, threonine 152, aspartate 174, and glutamine 197; that span reads AT. Lysine 198 carries the N6-(pyridoxal phosphate)lysine modification. 249-250 serves as a coordination point for pyridoxal 5'-phosphate; that stretch reads NT.

It belongs to the class-V pyridoxal-phosphate-dependent aminotransferase family. SerC subfamily. In terms of assembly, homodimer. It depends on pyridoxal 5'-phosphate as a cofactor.

The protein resides in the cytoplasm. The enzyme catalyses O-phospho-L-serine + 2-oxoglutarate = 3-phosphooxypyruvate + L-glutamate. It catalyses the reaction 4-(phosphooxy)-L-threonine + 2-oxoglutarate = (R)-3-hydroxy-2-oxo-4-phosphooxybutanoate + L-glutamate. Its pathway is amino-acid biosynthesis; L-serine biosynthesis; L-serine from 3-phospho-D-glycerate: step 2/3. It functions in the pathway cofactor biosynthesis; pyridoxine 5'-phosphate biosynthesis; pyridoxine 5'-phosphate from D-erythrose 4-phosphate: step 3/5. Its function is as follows. Catalyzes the reversible conversion of 3-phosphohydroxypyruvate to phosphoserine and of 3-hydroxy-2-oxo-4-phosphonooxybutanoate to phosphohydroxythreonine. The chain is Putative phosphoserine aminotransferase from Mycobacterium avium (strain 104).